Consider the following 400-residue polypeptide: Enoyl-[acyl-carrier-protein] reductase [NADH] 1 (400 aa).

NAD(+) contacts are provided by residues 48–53 (GASSGY), 74–75 (FE), 111–112 (DA), and 139–140 (LA). A substrate-binding site is contributed by Y225. Catalysis depends on Y235, which acts as the Proton donor. Residues K244 and 273 to 275 (VVT) contribute to the NAD(+) site.

The protein belongs to the TER reductase family. In terms of assembly, monomer.

The catalysed reaction is a 2,3-saturated acyl-[ACP] + NAD(+) = a (2E)-enoyl-[ACP] + NADH + H(+). It participates in lipid metabolism; fatty acid biosynthesis. Functionally, involved in the final reduction of the elongation cycle of fatty acid synthesis (FAS II). Catalyzes the reduction of a carbon-carbon double bond in an enoyl moiety that is covalently linked to an acyl carrier protein (ACP). In Vibrio vulnificus (strain CMCP6), this protein is Enoyl-[acyl-carrier-protein] reductase [NADH] 1.